Consider the following 253-residue polypeptide: Short-chain dehydrogenase/reductase ATR9 (253 aa).

NADP(+) contacts are provided by S15, S16, I18, S38, N39, R42, D65, and K129. The Proton donor role is filled by S147. Residue T194 participates in NADP(+) binding.

Belongs to the short-chain dehydrogenases/reductases (SDR) family.

It functions in the pathway mycotoxin biosynthesis. Short-chain dehydrogenase/reductase; part of the core atranone cluster (CAC) which products are predicted to catalyze most or all steps of mycotoxin atranone synthesis, starting from geranylgeranyl pyrophosphate (GGPP). The initial cyclization of GGPP to dolabellane is probably performed by the terpene cyclase ATR13. The Baeyer-Villiger oxidation near the end of the atranone synthesis, which converts atranones D and E to atranones F and G is predicted to be catalyzed by the monooxygenase ATR8. Of the CAC's other predicted gene products, the reducing PKS ATR6 might synthesize a polyketide chain. This polyketide is probably transferred onto the atranone backbone by the polyketide transferase ATR5. Other predicted CAC products include 4 oxygenases (ATR2, ATR3, ATR4, and ATR14), 3 short-chain reductases (ATR7, ATR9, and ATR10), and a methyltransferase (ATR12). These may all be involved in the various steps of atranone biosynthesis, although their specific roles must await experimental determination. The chain is Short-chain dehydrogenase/reductase ATR9 from Stachybotrys chlorohalonatus (strain IBT 40285).